The sequence spans 85 residues: MIVYPSIDKLLENVNSRYSLAVLASKRAHQIEAGDLKMLSEYKSPKTVGMAMEEIAAGNVTIDPDSLMLEKDAEKMDKLSQKDGE.

The protein belongs to the RNA polymerase subunit omega family. As to quaternary structure, the RNAP catalytic core consists of 2 alpha, 1 beta, 1 beta' and 1 omega subunit. When a sigma factor is associated with the core the holoenzyme is formed, which can initiate transcription.

The enzyme catalyses RNA(n) + a ribonucleoside 5'-triphosphate = RNA(n+1) + diphosphate. In terms of biological role, promotes RNA polymerase assembly. Latches the N- and C-terminal regions of the beta' subunit thereby facilitating its interaction with the beta and alpha subunits. The protein is DNA-directed RNA polymerase subunit omega of Latilactobacillus sakei subsp. sakei (strain 23K) (Lactobacillus sakei subsp. sakei).